A 410-amino-acid polypeptide reads, in one-letter code: Translation initiation factor 2 subunit gamma (410 aa).

The region spanning 6-203 (QSEVNIGMVG…AIQEFIPTPK (198 aa)) is the tr-type G domain. Residues 15-22 (GHVDHGKT) are G1. 4 residues coordinate Mg(2+): Asp18, Thr22, Gly43, and Ser45. 18-23 (DHGKTS) is a GTP binding site. The segment at 43–47 (GISIR) is G2. Zn(2+) contacts are provided by Cys58, Cys61, Cys73, and Cys76. The interval 90 to 93 (DAPG) is G3. GTP contacts are provided by residues 146–149 (NKID) and 181–183 (SAH). Residues 146-149 (NKID) form a G4 region. Residues 181-183 (SAH) form a G5 region.

The protein belongs to the TRAFAC class translation factor GTPase superfamily. Classic translation factor GTPase family. EIF2G subfamily. Heterotrimer composed of an alpha, a beta and a gamma chain. Mg(2+) is required as a cofactor.

It catalyses the reaction GTP + H2O = GDP + phosphate + H(+). EIF-2 functions in the early steps of protein synthesis by forming a ternary complex with GTP and initiator tRNA. This is Translation initiation factor 2 subunit gamma from Methanococcus maripaludis (strain C6 / ATCC BAA-1332).